A 1087-amino-acid polypeptide reads, in one-letter code: MKSNTKNSVKRKSPPPVNPNKKFPSFEGKQTSIKDFFFNDTTTPPKTPTQPIRFTQNNNKENDKSNNNNNNNNTITPIKKTTTTTTVVVESFDDSRNTNLIQQFQKASTPSSPQIPNKLPQQENQQQIPNTQQQQIKQLQQQQQQQQQESPNNLFKTIKTTTTTETFEEFLLSQPTTPPPSNTTTTTTTTSSSSPSSSNNITTIDDKNNLIKNNRYYLNDFLIVTETVYKRDKHLFINDEKDYIEGMIETLDRDSQHLFVRLYNRKGPWFQINELKSSNYQNEIKNIGAAIESLVEYGFLEYYSSDKHDYNEIANLLKIDQLKSIASSFSIPNSSGKETFLKVISGEPFKGQSTLFSPKPIYKKKVENLVGESIKIVTEVVELWRMIHHLYFYSWSTHDSKSMIVNNIMGIKYPEYTVWKSKVKKEVQQKEEEVEKEKEEILQNQLIQVKQESDVIDLTQNSSGSSNNNNNNNNNNNNNNNNNNNIKEYDIDLTENESIFPNRESLLKYENARKLEEKSINLYESGGDLVALESILQVCLDELGRSVSKKVKYSFALKFTVGWVYTRILSWSIDIFEKLRKYQQCIDFLMLLIESPYCRGKRGYWWQRMIINHKHLHRSDDALLIAERSLKEDPFLRSGDRLAIEKHLIQLSSPPRRWRIPAGLIQFSYKLKEPISTTIYREKVSNNQQGYKSKYLFLTPQIKINKIKKIIIKSSQSQNNQQKVQSSLSSQIQTQIQTQIQTQIQSSQIQIQSPIQSQSQSQNQTPIQSQINNNNNNILAISSQKSFDSILTTTSINNTQSSSQNIYIDEETSLEITSDDELFPPGQSYKIEKENQLQITNSVKKEEEQEEEEEEEEEGQGQEEEEEEEEIIEITHGTVEEVSLEHYSQNGGWEGIHCETSIFITLYVLYFWDIIFDSNVPHVFQSPFQNSPLDFGSDEFYFTRKEAIDNRIKRLEHSNYDDLLILLNQSWLHNGCEARGVNWKSTSLEQLSIISKCLGGKLIAFISRLLTEDFKSFSHGMPDLLLWKLNNNNDDDIDDKNNNNSSIKFVEVKGTGDRLRDQQRIWIDMLISFGCDVEVCLVKNKKN.

6 disordered regions span residues M1–K79, F104–L154, E169–T202, T459–I486, I816–N835, and S842–I871. The span at T41–K79 shows a compositional bias: low complexity. A compositionally biased stretch (polar residues) spans F104–I115. Composition is skewed to low complexity over residues K118 to L154, N182 to T202, and N467 to N485. Coiled-coil stretches lie at residues W419–D490 and K830–I874. Acidic residues predominate over residues E848–I871. Mn(2+) is bound by residues E899, D1023, E1051, and V1052. A VRR-NUC domain is found at D961–K1083.

It belongs to the FAN1 family. It depends on Mn(2+) as a cofactor. Requires Mg(2+) as cofactor.

It catalyses the reaction Hydrolytically removes 5'-nucleotides successively from the 3'-hydroxy termini of 3'-hydroxy-terminated oligonucleotides.. Its function is as follows. Nuclease required for the repair of DNA interstrand cross-links (ICL). Acts as a 5'-3' exonuclease that anchors at a cut end of DNA and cleaves DNA successively at every third nucleotide, allowing to excise an ICL from one strand through flanking incisions. This is Fanconi-associated nuclease 1 homolog (mtmr15) from Dictyostelium discoideum (Social amoeba).